A 138-amino-acid chain; its full sequence is ATP synthase epsilon chain (138 aa).

Belongs to the ATPase epsilon chain family. As to quaternary structure, F-type ATPases have 2 components, CF(1) - the catalytic core - and CF(0) - the membrane proton channel. CF(1) has five subunits: alpha(3), beta(3), gamma(1), delta(1), epsilon(1). CF(0) has three main subunits: a, b and c.

The protein resides in the cell inner membrane. Functionally, produces ATP from ADP in the presence of a proton gradient across the membrane. The polypeptide is ATP synthase epsilon chain (Geobacter sulfurreducens (strain ATCC 51573 / DSM 12127 / PCA)).